The primary structure comprises 154 residues: uncharacterized protein (154 aa).

The segment at Asn-104 to Glu-124 is disordered. A compositionally biased stretch (basic and acidic residues) spans Asn-112 to Glu-124.

This is an uncharacterized protein from Dictyostelium discoideum (Social amoeba).